We begin with the raw amino-acid sequence, 365 residues long: U1 snRNP-associated protein usp109 (365 aa).

RRM domains follow at residues 3–79 (TSLW…VVPE), 86–162 (YMLF…SVKS), and 189–259 (TAVY…WARP).

As to quaternary structure, component of the U1 snRNP complex.

It localises to the nucleus. The protein is U1 snRNP-associated protein usp109 (usp109) of Schizosaccharomyces pombe (strain 972 / ATCC 24843) (Fission yeast).